Here is a 655-residue protein sequence, read N- to C-terminus: p-hydroxybenzoic acid efflux pump subunit AaeB (655 aa).

Transmembrane regions (helical) follow at residues 13 to 33 (FAVK…HFQL), 38 to 58 (WAVL…GGEP), 69 to 89 (LRII…ISMI), 93 to 113 (LLMI…SSLV), 121 to 141 (WGLS…EPLL), 152 to 172 (EIVI…PRSI), 370 to 390 (LFWL…IAVV), 407 to 427 (FIYG…VIIP), 431 to 451 (QSML…GIEV), 459 to 479 (MGAL…TFHF), and 482 to 502 (FLDS…VILL).

Belongs to the aromatic acid exporter ArAE (TC 2.A.85) family.

It is found in the cell inner membrane. In terms of biological role, forms an efflux pump with AaeA. Could function as a metabolic relief valve, allowing to eliminate certain compounds when they accumulate to high levels in the cell. In Salmonella dublin (strain CT_02021853), this protein is p-hydroxybenzoic acid efflux pump subunit AaeB.